The following is a 392-amino-acid chain: uncharacterized protein (392 aa).

This sequence belongs to the glycosyltransferase group 1 family. Glycosyltransferase 4 subfamily.

This is an uncharacterized protein from Methanocaldococcus jannaschii (strain ATCC 43067 / DSM 2661 / JAL-1 / JCM 10045 / NBRC 100440) (Methanococcus jannaschii).